Here is a 143-residue protein sequence, read N- to C-terminus: Mini-ribonuclease 3 (143 aa).

The active site involves Asp35.

This sequence belongs to the MrnC RNase family. Homodimer. Mg(2+) serves as cofactor.

It localises to the cytoplasm. Its function is as follows. Involved in correct processing of both the 5' and 3' ends of 23S rRNA precursor. Processes 30S rRNA precursor transcript even in absence of ribonuclease 3 (Rnc); Rnc processes 30S rRNA into smaller rRNA precursors. The chain is Mini-ribonuclease 3 from Synechocystis sp. (strain ATCC 27184 / PCC 6803 / Kazusa).